Consider the following 496-residue polypeptide: Galactan beta-1,4-galactosyltransferase GALS1 (496 aa).

Residues 22 to 42 (IIATLLALSLVMIVWNLPPYY) traverse the membrane as a helical segment. One can recognise a GT92 domain in the interval 232 to 464 (DYLYCGSSLY…AKKKVTLYNK (233 aa)).

This sequence belongs to the glycosyltransferase 92 family. Expressed in root vasculature, mature leaves, trichomes, flowers, siliques and seeds.

The protein localises to the golgi apparatus membrane. Involved in the biosynthesis of beta-1,4-galactan. Can transfer galactose residues from UDP-galactose to beta-1,4-galactopentaose in vitro. Forms specifically beta-1,4-galactosyl linkages and can add successive beta-1,4-galactosyl residues to the acceptor. Beta-1,4-galactans are abundant polysaccharides in plant cell walls and are found as side-chain of rhamnogalacturonan I, which is a major component of pectin. The sequence is that of Galactan beta-1,4-galactosyltransferase GALS1 from Arabidopsis thaliana (Mouse-ear cress).